The primary structure comprises 204 residues: Guanylate kinase (204 aa).

Residues 5–184 (GLLLVLSGPS…AVDHIKAIVD (180 aa)) form the Guanylate kinase-like domain. Residue 12–19 (GPSGVGKG) coordinates ATP.

It belongs to the guanylate kinase family.

It localises to the cytoplasm. It catalyses the reaction GMP + ATP = GDP + ADP. In terms of biological role, essential for recycling GMP and indirectly, cGMP. The chain is Guanylate kinase from Lactobacillus acidophilus (strain ATCC 700396 / NCK56 / N2 / NCFM).